A 308-amino-acid chain; its full sequence is Protein UL135 (308 aa).

The signal sequence occupies residues 1–22 (MVWLWLGVGLLGGTGLASLVLA). The interval 105 to 274 (KPEFPPARFE…TEPTTLPIVS (170 aa)) is disordered. Positions 126 to 145 (SIGRSPSHCSSSSSLSSSAS) are enriched in low complexity. Composition is skewed to pro residues over residues 152–163 (QPPPSWKPPPPP) and 219–238 (PVTPRPFPKTPTPQKPPRNP).

Belongs to the HCMV UL135 family. Interacts with host components of the WAVE2 complex ABI1, NAP1 and WAVE2. Also interacts with host ABI2 and TLN1.

It is found in the host cell membrane. It localises to the host Golgi apparatus. Functionally, remodels the host actin cytoskeleton in order to impair immune recognition of infected cells. Mechanistically, interacts with members of the host WAVE2 complex and redirects the complex to the plasma membrane. In turn, the efficiency of immune synapse formation is greatly reduced. In Human cytomegalovirus (strain Merlin) (HHV-5), this protein is Protein UL135 (UL135).